Reading from the N-terminus, the 848-residue chain is Adenylate cyclase (848 aa).

Positions Met-1–Leu-535 are catalytic. The tract at residues Lys-541 to His-848 is regulatory.

The protein belongs to the adenylyl cyclase class-1 family.

Its subcellular location is the cytoplasm. The catalysed reaction is ATP = 3',5'-cyclic AMP + diphosphate. With respect to regulation, the regulatory domain is involved in the regulation of cyclase activity by the carbon source. The polypeptide is Adenylate cyclase (cya) (Yersinia intermedia).